Here is a 285-residue protein sequence, read N- to C-terminus: Pantothenate synthetase (285 aa).

ATP is bound at residue 30–37 (MGYLHEGH). The Proton donor role is filled by His37. Gln61 contributes to the (R)-pantoate binding site. Gln61 is a binding site for beta-alanine. ATP is bound at residue 148–151 (GKKD). Gln154 is a binding site for (R)-pantoate. ATP contacts are provided by residues Ile177 and 185–188 (LSSR).

The protein belongs to the pantothenate synthetase family. As to quaternary structure, homodimer.

The protein resides in the cytoplasm. The catalysed reaction is (R)-pantoate + beta-alanine + ATP = (R)-pantothenate + AMP + diphosphate + H(+). The protein operates within cofactor biosynthesis; (R)-pantothenate biosynthesis; (R)-pantothenate from (R)-pantoate and beta-alanine: step 1/1. In terms of biological role, catalyzes the condensation of pantoate with beta-alanine in an ATP-dependent reaction via a pantoyl-adenylate intermediate. The protein is Pantothenate synthetase of Leptospira borgpetersenii serovar Hardjo-bovis (strain JB197).